A 341-amino-acid chain; its full sequence is MYPLARRILFALDAEKAHHFTLDALNMVYKLGLIPVTGNRTKPVKLMGLDLPNPVGLAAGLDKNGEYIDALGALGFGFIEIGTVTPNPQPGNPQPRLFRVPEYQGIINRMGFNNHGIDAMIQNIEKSKFSGVLGINIGKNAVTPIENAADDYLICLEKAYAHASYITVNISSPNTKNLRALQGGDELSALLEALKNKQAQLASVHGKYVPLAVKIAPDLDEAQIEDIAHVVKSVEMDGIIATNTTIDKSSLGSHPLAGEQGGLSGLPVHEKSNRVLKLLADHIDGKLPIIGVGGIMEGRDAAEKIRLGATAVQVYSGLIYKGPALVKECLKALARSAQNAV.

Residues 59–63 (AGLDK) and threonine 83 each bind FMN. A substrate-binding site is contributed by lysine 63. 108–112 (NRMGF) is a substrate binding site. FMN is bound by residues asparagine 136 and asparagine 169. Asparagine 169 provides a ligand contact to substrate. Serine 172 acts as the Nucleophile in catalysis. Asparagine 174 serves as a coordination point for substrate. FMN contacts are provided by lysine 214 and threonine 242. 243–244 (NT) is a substrate binding site. Residues glycine 265, glycine 294, and 315-316 (YS) contribute to the FMN site.

This sequence belongs to the dihydroorotate dehydrogenase family. Type 2 subfamily. As to quaternary structure, monomer. FMN is required as a cofactor.

It localises to the cell membrane. The enzyme catalyses (S)-dihydroorotate + a quinone = orotate + a quinol. It participates in pyrimidine metabolism; UMP biosynthesis via de novo pathway; orotate from (S)-dihydroorotate (quinone route): step 1/1. In terms of biological role, catalyzes the conversion of dihydroorotate to orotate with quinone as electron acceptor. In Neisseria meningitidis serogroup C (strain 053442), this protein is Dihydroorotate dehydrogenase (quinone).